The primary structure comprises 454 residues: Gastrin/cholecystokinin type B receptor (454 aa).

The Extracellular segment spans residues 1–57 (MELLKPNRSVLGSGPGPGASLCRSGGPLLNGSGTGNLSCEPPRIRGAGTRELELAIR). Asn-7, Asn-30, and Asn-36 each carry an N-linked (GlcNAc...) asparagine glycan. The helical transmembrane segment at 58-79 (VTLYAVIFLMSVGGNVLIIVVL) threads the bilayer. At 80–87 (GLSRRLRT) the chain is on the cytoplasmic side. The chain crosses the membrane as a helical span at residues 88-109 (VTNAFLLSLAVSDLLLAVACMP). Topologically, residues 110 to 131 (FTLLPNLMGTFIFGTVVCKAVS) are extracellular. Cysteines 127 and 205 form a disulfide. The chain crosses the membrane as a helical span at residues 132 to 150 (YFMGVSVSVSTLSLVAIAL). Over 151-170 (ERYSAICRPLQARVWQTRSH) the chain is Cytoplasmic. The chain crosses the membrane as a helical span at residues 171-189 (AARVIVATWMLSGLLMVPY). The Extracellular portion of the chain corresponds to 190–219 (PVYTAVQPAGPRVLQCMHRWPSARVRQTWS). The helical transmembrane segment at 220–242 (VLLLLLLFFVPGVVMAVAYGLIS) threads the bilayer. The Cytoplasmic segment spans residues 243–340 (RELYLGLRFD…KLLAKKRVVR (98 aa)). The disordered stretch occupies residues 257 to 284 (SESQSRVGSQGGLPGGTGQGPAQANGRC). The segment covering 265–275 (SQGGLPGGTGQ) has biased composition (gly residues). A helical membrane pass occupies residues 341-362 (MLLVIVVLFFLCWLPVYSANTW). Residues 363–380 (RAFDGPGAHRALSGAPIS) are Extracellular-facing. The helical transmembrane segment at 381–401 (FIHLLTYASACVNPLVYCFMH) threads the bilayer. The Cytoplasmic portion of the chain corresponds to 402 to 454 (RRFRQACLDTCTRCCPRPPRARPRPLPDEDPPTPSIASLSRLSYTTISTLGPG). Cys-415 is lipidated: S-palmitoyl cysteine. Residues 422 to 441 (ARPRPLPDEDPPTPSIASLS) form a disordered region.

Belongs to the G-protein coupled receptor 1 family.

It is found in the cell membrane. Functionally, receptor for gastrin and cholecystokinin. The CCK-B receptors occur throughout the central nervous system where they modulate anxiety, analgesia, arousal, and neuroleptic activity. This receptor mediates its action by association with G proteins that activate a phosphatidylinositol-calcium second messenger system. The polypeptide is Gastrin/cholecystokinin type B receptor (CCKBR) (Bos taurus (Bovine)).